The sequence spans 145 residues: uncharacterized protein (145 aa).

This sequence belongs to the methyltransferase superfamily.

Probable methyltransferase. This is an uncharacterized protein from Schizosaccharomyces pombe (strain 972 / ATCC 24843) (Fission yeast).